A 644-amino-acid polypeptide reads, in one-letter code: Phosphatidylinositol polyphosphate 5-phosphatase type IV (644 aa).

Residues M1–P193 form a disordered region. Tandem repeats lie at residues P10–P13, P15–P18, P28–P31, P39–V42, P55–P58, P69–A71, P72–P74, and P75–P78. The segment at P10–P242 is 13 X 4 AA repeats of P-X-X-P. Positions P78–G90 are enriched in basic and acidic residues. S99 is modified (phosphoserine). Residues N107–S118 show a composition bias toward polar residues. Residues P121–P124 form repeat 9. A compositionally biased stretch (low complexity) spans G152–G163. Repeat copies occupy residues P169–P172, P183–L185, P190–P193, and P236–P239. A phosphoserine mark is found at S241 and S256. Position 641 is a cysteine methyl ester (C641). A lipid anchor (S-farnesyl cysteine) is attached at C641. The propeptide at S642–S644 is removed in mature form.

This sequence belongs to the inositol polyphosphate 5-phosphatase family. In terms of assembly, interacts (when prenylated) with PDE6D; this is important for normal location in cilia.

Its subcellular location is the cytoplasm. It localises to the cytoskeleton. It is found in the cilium axoneme. The protein localises to the golgi apparatus. The protein resides in the golgi stack membrane. Its subcellular location is the cell membrane. It localises to the cell projection. It is found in the ruffle. The protein localises to the nucleus. The enzyme catalyses a 1,2-diacyl-sn-glycero-3-phospho-(1D-myo-inositol-4,5-bisphosphate) + H2O = a 1,2-diacyl-sn-glycero-3-phospho-(1D-myo-inositol 4-phosphate) + phosphate. It carries out the reaction a 1,2-diacyl-sn-glycero-3-phospho-(1D-myo-inositol-3,4,5-trisphosphate) + H2O = a 1,2-diacyl-sn-glycero-3-phospho-(1D-myo-inositol-3,4-bisphosphate) + phosphate. It catalyses the reaction a 1,2-diacyl-sn-glycero-3-phospho-(1D-myo-inositol-3,5-bisphosphate) + H2O = a 1,2-diacyl-sn-glycero-3-phospho-(1D-myo-inositol-3-phosphate) + phosphate. Functionally, phosphatidylinositol (PtdIns) phosphatase that specifically hydrolyzes the 5-phosphate of phosphatidylinositol-3,4,5-trisphosphate (PtdIns(3,4,5)P3), phosphatidylinositol 4,5-bisphosphate(PtdIns(4,5)P2) and phosphatidylinositol 3,5-bisphosphate (PtdIns(3,5)P2). Specific for lipid substrates, inactive towards water soluble inositol phosphates. Plays an essential role in the primary cilium by controlling ciliary growth and phosphoinositide 3-kinase (PI3K) signaling and stability. The chain is Phosphatidylinositol polyphosphate 5-phosphatase type IV (INPP5E) from Pan troglodytes (Chimpanzee).